The primary structure comprises 221 residues: uncharacterized protein (221 aa).

This is an uncharacterized protein from Archaeoglobus fulgidus (strain ATCC 49558 / DSM 4304 / JCM 9628 / NBRC 100126 / VC-16).